The primary structure comprises 151 residues: Coiled-coil-helix-coiled-coil-helix domain-containing protein 2 (151 aa).

Disordered regions lie at residues 1–50 (MPRG…AAAP) and 77–111 (GHAI…AQQQ). Low complexity predominate over residues 10–26 (SRMAPPASRAPQMRAAP). Over residues 27-38 (RPAPVAQPPAAA) the composition is skewed to pro residues. 2 stretches are compositionally biased toward low complexity: residues 39–50 (PPSAVGSSAAAP) and 100–111 (QEPQGTQPAQQQ). One can recognise a CHCH domain in the interval 111-151 (QQPCLYEIKQFLECAQNQGDIKLCEGFNEVLKQCRLANGLA). 2 consecutive short sequence motifs (cx9C motif) follow at residues 114–124 (CLYEIKQFLEC) and 134–144 (CEGFNEVLKQC). Disulfide bonds link Cys-114-Cys-144 and Cys-124-Cys-134.

In terms of assembly, interacts with RBPJ.

Its subcellular location is the nucleus. The protein resides in the mitochondrion. It is found in the mitochondrion intermembrane space. In terms of biological role, transcription factor. Binds to the oxygen responsive element of COX4I2 and activates its transcription under hypoxia conditions (4% oxygen), as well as normoxia conditions (20% oxygen). The sequence is that of Coiled-coil-helix-coiled-coil-helix domain-containing protein 2 (CHCHD2) from Homo sapiens (Human).